The chain runs to 436 residues: 3-ketoacyl-CoA thiolase (436 aa).

The active-site Acyl-thioester intermediate is the Cys-99. Residues His-392 and Cys-422 each act as proton acceptor in the active site.

This sequence belongs to the thiolase-like superfamily. Thiolase family. Heterotetramer of two alpha chains (FadJ) and two beta chains (FadI).

The protein localises to the cytoplasm. It catalyses the reaction an acyl-CoA + acetyl-CoA = a 3-oxoacyl-CoA + CoA. Its pathway is lipid metabolism; fatty acid beta-oxidation. In terms of biological role, catalyzes the final step of fatty acid oxidation in which acetyl-CoA is released and the CoA ester of a fatty acid two carbons shorter is formed. The sequence is that of 3-ketoacyl-CoA thiolase from Shewanella sediminis (strain HAW-EB3).